The chain runs to 437 residues: U1 small nuclear ribonucleoprotein 70 kDa (437 aa).

N-acetylthreonine is present on threonine 2. The disordered stretch occupies residues 48-79 (FEDPRDAPPPTRAETREERMERKRREKIERRQ). Positions 60–79 (AETREERMERKRREKIERRQ) are enriched in basic and acidic residues. The interval 92-202 (HNDPNAQGDA…GGGLGGTRRG (111 aa)) is required for interaction with U1 RNA. The 79-residue stretch at 103–181 (KTLFVARVNY…RRVLVDVERG (79 aa)) folds into the RRM domain. Position 118 is an N6-acetyllysine (lysine 118). At tyrosine 126 the chain carries Phosphotyrosine. The segment at 187 to 437 (WRPRRLGGGL…NGYLMEAAPE (251 aa)) is disordered. Gly residues predominate over residues 192 to 201 (LGGGLGGTRR). Basic and acidic residues predominate over residues 207-254 (NIRHSGRDDTSRYDERPGPSPLPHRDRDRDRERERRERSRERDKERER). A phosphoserine mark is found at serine 226 and serine 268. Over residues 255–268 (RRSRSRDRRRRSRS) the composition is skewed to basic residues. Composition is skewed to basic and acidic residues over residues 269–286 (RDKE…DKDR) and 294–310 (RSRE…EELR). Serine 320 is modified (phosphoserine). The span at 343–393 (PEEKGRDRDRERRRSHRSERERRRDRDRDRDRDREHKRGERGSERGRDEAR) shows a compositional bias: basic and acidic residues. Lysine 346 participates in a covalent cross-link: Glycyl lysine isopeptide (Lys-Gly) (interchain with G-Cter in SUMO2). Serine 410 bears the Phosphoserine mark.

Component of the U1 snRNP. The U1 snRNP is composed of the U1 snRNA and the 7 core Sm proteins SNRPB, SNRPD1, SNRPD2, SNRPD3, SNRPE, SNRPF and SNRPG that assemble in a heptameric protein ring on the Sm site of the small nuclear RNA to form the core snRNP, and at least three U1 snRNP-specific proteins SNRNP70/U1-70K, SNRPA/U1-A and SNRPC/U1-C. Interacts with SCNM1. Found in a pre-mRNA splicing complex with SFRS4, SFRS5, SNRNP70, SNRPA1, SRRM1 and SRRM2. Found in a pre-mRNA exonic splicing enhancer (ESE) complex with SNRNP70, SNRPA1, SRRM1 and TRA2B/SFRS10. Interacts with dephosphorylated SFRS13A and SFPQ. Interacts with NUDT21/CPSF5, CPSF6, SCAF11, and ZRANB2. Interacts with GEMIN5. Interacts with FUS. In terms of processing, the N-terminus is blocked. Extensively phosphorylated on serine residues in the C-terminal region.

It localises to the nucleus speckle. Its subcellular location is the nucleus. The protein localises to the nucleoplasm. Functionally, component of the spliceosomal U1 snRNP, which is essential for recognition of the pre-mRNA 5' splice-site and the subsequent assembly of the spliceosome. SNRNP70 binds to the loop I region of U1-snRNA. Its function is as follows. Truncated isoforms that lack the RRM domain cannot bind U1-snRNA. The protein is U1 small nuclear ribonucleoprotein 70 kDa (SNRNP70) of Homo sapiens (Human).